The sequence spans 670 residues: Zinc finger protein 233 (670 aa).

Residues 8-79 (VTFKDVAVVF…ETEIQGDGCS (72 aa)) form the KRAB domain. The C2H2-type 1; degenerate zinc-finger motif lies at 258–280 (QTSDENGKGLSVGSNLELHQQLH). The C2H2-type 2; degenerate zinc finger occupies 311–336 (EKCYRNGDSGEGFSQGSHLQPHQRVS). The C2H2-type 3; degenerate zinc-finger motif lies at 342 to 364 (YRCQVYARSSNQNSCLPSHELTH). A C2H2-type 4; degenerate zinc finger spans residues 370–392 (CTCGRCGKGFHHSLDFDIHCVDS). The C2H2-type 5; degenerate zinc-finger motif lies at 398–420 (CKCDVYDKGFSQTSQLQAHQRGH). 7 C2H2-type zinc fingers span residues 452–474 (YKCEVCDKGFSKASNLQAHQRIH), 480–502 (YKCDVCDKNFSRNSHLQAHQRVH), 508–530 (YKCDTCGKDFSQISHLQAHQRVH), 536–558 (YKCETCGKGFSQSSHLQDHQQVH), 564–586 (YKCDVCGKGFSWSSHLQAHQRVH), 592–614 (YKCEECRKGFIWNSYLHVHQRIH), and 620–642 (YKCGMCGKSFSQTSHLQAHQRVH).

It belongs to the krueppel C2H2-type zinc-finger protein family.

The protein localises to the nucleus. Its function is as follows. May be involved in transcriptional regulation. The chain is Zinc finger protein 233 (ZNF233) from Homo sapiens (Human).